The following is a 1033-amino-acid chain: MTARMISIYGLVLASMMASVLASSSRFQRLPQSQSVVENESVKFECESTDSYSELHYDWLHNGHRIAYDKRVHQIGSNLHIEAVRRTEDVGSYVCIATNLASGAREASPPAKLSVIYIESASVQLLGSNRNELLLKCHVEGASGDSEPLEIEWYRNSEKLSTWRNVQLDQHRLIVRQPGSDDDGLYRCTASNAAGRVMSKQGYVYQSSVKCLPRLARRKSQKVMESWDKQTFLCRGKRGGAAGLEALPAAPEDLRIVQGPIAQSIIKEGEPTALTCLYELPDELKNQRIQLRWRKDGKLLRQVELGGSAPISGHSFDSGKDALLREDARLVLHKQNGTLSFASIIASDAGQYQCQLQLEAHVPVSSSPGVLEVIEQLKFVPQPTSKNLELDAVVAKVHCKAQGTPTPQVQWVREGENNTLPDQVEVDANGTLIFRNVNSEHRGNYTCLATNTQGQINATVAINVVVTPKFSVPPVGPIETAELGTVVIHCQAIGDPKPTIQWDKDLKYLSENNTDRERFRFLENGTLEIRNVQVEDEGSYGCTIGNSAGLKREDVQLIVKTTGDGFAPEESGGDGFLVTRAVLITMTVALAYIVLVVGLMLWCRYRRQARKARLNDLSTKEAGGDQPDATGNGKGSEQEPCLSKQHNGHSKSRSKSSGDAQKSDDTACSQQSRASKKSAHIYEQLALPRSGLSELIQIGRGEFGDVFVGKLKATLVTSPSDKDADTEKQHSNSENGSGGSGSGSTTLSTLNEKRRSKTSMDDIEEIKEEEQEQHNQSGLEQLVLVKALNKVKDEQACQEFRRQLDLLRAISHKGVVRLFGLCREKDPHYMVLEYTDWGDLKQFLLATAGKVNTATAGSSSPPPLTTSQVLAVAYQIARGMDAIYRARFTHRDLATRNCVISSEFIVKVSYPALCKDKYSREYHKHRNTLLPIRWLAPECIQEDEYTTKSDIFAYGVVVWELFNQATKLPHEELTNEQVVQRSQAGSLEWSVAESTPDSLREILLSCWVANPKERPSFSQLGAALSKAMQSAEK.

Positions 1–22 (MTARMISIYGLVLASMMASVLA) are cleaved as a signal peptide. Topologically, residues 23–581 (SSSRFQRLPQ…GGDGFLVTRA (559 aa)) are extracellular. Ig-like C2-type domains lie at 25–114 (SRFQ…AKLS), 113–199 (LSVI…RVMS), 251–365 (PEDL…VPVS), 368–463 (PGVL…VAIN), and 468–558 (PKFS…VQLI). Asparagine 39 carries N-linked (GlcNAc...) asparagine glycosylation. 4 disulfide bridges follow: cysteine 46/cysteine 95, cysteine 137/cysteine 188, cysteine 276/cysteine 354, and cysteine 399/cysteine 447. 7 N-linked (GlcNAc...) asparagine glycosylation sites follow: asparagine 336, asparagine 417, asparagine 429, asparagine 444, asparagine 457, asparagine 512, and asparagine 524. Cysteine 490 and cysteine 542 are oxidised to a cystine. The helical transmembrane segment at 582 to 602 (VLITMTVALAYIVLVVGLMLW) threads the bilayer. Residues 603-1033 (CRYRRQARKA…LSKAMQSAEK (431 aa)) are Cytoplasmic-facing. Disordered regions lie at residues 617 to 679 (LSTK…KKSA) and 718 to 760 (SPSD…KTSM). Residues 655–673 (KSSGDAQKSDDTACSQQSR) are compositionally biased toward polar residues. Serine 678 is subject to Phosphoserine. In terms of domain architecture, Protein kinase; inactive spans 692-1028 (LSELIQIGRG…QLGAALSKAM (337 aa)). A compositionally biased stretch (basic and acidic residues) spans 720–731 (SDKDADTEKQHS).

Belongs to the protein kinase superfamily. Tyr protein kinase family. Insulin receptor subfamily. In terms of assembly, interacts with plexA; component of a receptor complex that mediates the repulsive signaling in response to Semaphorin ligands.

Its subcellular location is the cell membrane. In terms of biological role, acts as a calcium-dependent, homophilic cell adhesion molecule that regulates neural recognition during the development of the nervous system. Component of the repulsive Plexin signaling response to regulate motor axon guidance at the embryonic stage. Also component of a receptor complex that is required in the adult visual system to innervate the lamina layer; specific targeting of R1-R6 axons. This chain is Tyrosine-protein kinase-like otk, found in Drosophila yakuba (Fruit fly).